A 94-amino-acid chain; its full sequence is Putative pterin-4-alpha-carbinolamine dehydratase (94 aa).

Belongs to the pterin-4-alpha-carbinolamine dehydratase family.

It catalyses the reaction (4aS,6R)-4a-hydroxy-L-erythro-5,6,7,8-tetrahydrobiopterin = (6R)-L-erythro-6,7-dihydrobiopterin + H2O. This is Putative pterin-4-alpha-carbinolamine dehydratase from Mycobacterium sp. (strain JLS).